The primary structure comprises 365 residues: Phospho-N-acetylmuramoyl-pentapeptide-transferase (365 aa).

10 helical membrane-spanning segments follow: residues 22–42 (YISV…LALG), 74–94 (TMGG…WGDL), 95–115 (TSIY…IGFF), 134–154 (KFAL…YLLS), 168–188 (SLYI…IING), 201–221 (GLAI…AYIE), 240–260 (LAEV…FLWF), 267–287 (VFMG…IAVM), 292–312 (LIFF…MLQV), and 342–362 (KVVI…LAAI).

The protein belongs to the glycosyltransferase 4 family. MraY subfamily. Requires Mg(2+) as cofactor.

It is found in the cell inner membrane. The catalysed reaction is UDP-N-acetyl-alpha-D-muramoyl-L-alanyl-gamma-D-glutamyl-meso-2,6-diaminopimeloyl-D-alanyl-D-alanine + di-trans,octa-cis-undecaprenyl phosphate = di-trans,octa-cis-undecaprenyl diphospho-N-acetyl-alpha-D-muramoyl-L-alanyl-D-glutamyl-meso-2,6-diaminopimeloyl-D-alanyl-D-alanine + UMP. It functions in the pathway cell wall biogenesis; peptidoglycan biosynthesis. Its function is as follows. Catalyzes the initial step of the lipid cycle reactions in the biosynthesis of the cell wall peptidoglycan: transfers peptidoglycan precursor phospho-MurNAc-pentapeptide from UDP-MurNAc-pentapeptide onto the lipid carrier undecaprenyl phosphate, yielding undecaprenyl-pyrophosphoryl-MurNAc-pentapeptide, known as lipid I. The sequence is that of Phospho-N-acetylmuramoyl-pentapeptide-transferase from Francisella tularensis subsp. novicida (strain U112).